The chain runs to 897 residues: 3'-5' exonuclease DinG (897 aa).

In terms of domain architecture, Exonuclease spans 8–161; it reads VVDLETTGNQ…DEDAATTAKL (154 aa). One can recognise a Helicase ATP-binding domain in the interval 241–496; sequence SKAVDQLGLT…KAIDQLEKQR (256 aa). ATP is bound at residue 276–283; the sequence is ASLGSGKS. Positions 448–451 match the DEAH box motif; it reads DEAH. Positions 703 to 883 constitute a Helicase C-terminal domain; it reads NIDEYVASIV…NYRQKKGDIQ (181 aa).

Belongs to the helicase family. DinG subfamily. Type 2 sub-subfamily.

Functionally, 3'-5' exonuclease. This is 3'-5' exonuclease DinG from Staphylococcus aureus (strain bovine RF122 / ET3-1).